Reading from the N-terminus, the 427-residue chain is Capsid vertex protein (427 aa).

This sequence belongs to the Tevenvirinae capsid vertex family. In terms of assembly, homopentamer. Interacts with the portal protein. Interacts with the major capsid protein that forms hexamers. Post-translationally, proteolytic cleavage at the N-terminus by the prohead core protein protease gives rise to the mature capsid vertex protein.

It localises to the virion. Capsid protein that self-associates to form pentons, building the capsid in association with hexamers of the major capsid protein and one dodecamer of the portal protein. The capsid vertex protein self-associates to form 11 pentons, building the T=13 laevo capsid in association with 160 hexamers of the major capsid protein. This is Capsid vertex protein from Escherichia coli O157:H7 (Bacteriophage AR1).